The following is a 185-amino-acid chain: Ribosome-recycling factor (185 aa).

The protein belongs to the RRF family.

Its subcellular location is the cytoplasm. Functionally, responsible for the release of ribosomes from messenger RNA at the termination of protein biosynthesis. May increase the efficiency of translation by recycling ribosomes from one round of translation to another. The sequence is that of Ribosome-recycling factor from Acidothermus cellulolyticus (strain ATCC 43068 / DSM 8971 / 11B).